A 258-amino-acid polypeptide reads, in one-letter code: Synaptosomal-associated protein 29 (258 aa).

Residues 1-41 (MSAYPKSYNPFDDDGEDEGARPAPWRDARDLPDGPDAPADR) form a disordered region. Residues 18–32 (EGARPAPWRDARDLP) show a composition bias toward basic and acidic residues. Positions 76–107 (ASSEELARQRGVLERTEKMVDKMDQDLKISQK) form a coiled coil. Phosphoserine is present on residues Ser-77, Ser-78, and Ser-114. 2 positions are modified to phosphothreonine: Thr-130 and Thr-137. The disordered stretch occupies residues 150 to 191 (ISTSKEQEAKYQASHPNLRKLDDTDPVPRGAGSAMSTDAYPK). Phosphoserine is present on residues Ser-163, Ser-182, Ser-185, Ser-204, and Ser-210. Positions 196–258 (RAYHQKIDSN…KSTERKVRQL (63 aa)) constitute a t-SNARE coiled-coil homology domain.

It belongs to the SNAP-25 family. In terms of assembly, forms a SNARE complex, composed of VAMP8, SNAP29 and STX17, involved in fusion of autophagosome with lysosome. Interacts with multiple syntaxins including STX6. Interacts with EIPR1. Interacts with STX17; this interaction is increased in the absence of TMEM39A. As to quaternary structure, (Microbial infection) Interacts with Hantaan hantavirus nucleoprotein; this interaction prevents the breakdown of the viral glycoprotein N by virus-triggered autophagy. (Microbial infection) The interaction with STX17 is decreased in presence of SARS coronavirus-2/SARS-CoV-2 ORF3A protein. Found in brain, heart, kidney, liver, lung, placenta, skeletal muscle, spleen and pancreas.

It localises to the cytoplasm. Its subcellular location is the golgi apparatus membrane. The protein localises to the cytoplasmic vesicle. The protein resides in the autophagosome membrane. It is found in the cell projection. It localises to the cilium membrane. SNAREs, soluble N-ethylmaleimide-sensitive factor-attachment protein receptors, are essential proteins for fusion of cellular membranes. SNAREs localized on opposing membranes assemble to form a trans-SNARE complex, an extended, parallel four alpha-helical bundle that drives membrane fusion. SNAP29 is a SNARE involved in autophagy through the direct control of autophagosome membrane fusion with the lysososome membrane. Also plays a role in ciliogenesis by regulating membrane fusions. The sequence is that of Synaptosomal-associated protein 29 from Homo sapiens (Human).